A 775-amino-acid chain; its full sequence is Dipeptidyl peptidase 4 (775 aa).

An N-terminal signal peptide occupies residues 1–15 (MKLLSLLMLAGIAQA). N-linked (GlcNAc...) asparagine glycosylation is found at N81, N111, N170, and N219. Residues S613, D690, and H725 each act as charge relay system in the active site.

Belongs to the peptidase S9B family.

It localises to the secreted. It carries out the reaction Release of an N-terminal dipeptide, Xaa-Yaa-|-Zaa-, from a polypeptide, preferentially when Yaa is Pro, provided Zaa is neither Pro nor hydroxyproline.. In terms of biological role, extracellular dipeptidyl-peptidase which removes N-terminal dipeptides sequentially from polypeptides having unsubstituted N-termini provided that the penultimate residue is proline. Contributes to pathogenicity. The polypeptide is Dipeptidyl peptidase 4 (DPP4) (Trichophyton tonsurans (Scalp ringworm fungus)).